The following is a 378-amino-acid chain: Erythronate-4-phosphate dehydrogenase (378 aa).

Residues Ser45 and Thr66 each coordinate substrate. Positions 146 and 175 each coordinate NAD(+). Arg208 is an active-site residue. Residue Asp232 coordinates NAD(+). Residue Glu237 is part of the active site. His254 (proton donor) is an active-site residue. Gly257 provides a ligand contact to NAD(+). Residue Tyr258 coordinates substrate.

Belongs to the D-isomer specific 2-hydroxyacid dehydrogenase family. PdxB subfamily. As to quaternary structure, homodimer.

The protein resides in the cytoplasm. It catalyses the reaction 4-phospho-D-erythronate + NAD(+) = (R)-3-hydroxy-2-oxo-4-phosphooxybutanoate + NADH + H(+). The protein operates within cofactor biosynthesis; pyridoxine 5'-phosphate biosynthesis; pyridoxine 5'-phosphate from D-erythrose 4-phosphate: step 2/5. Catalyzes the oxidation of erythronate-4-phosphate to 3-hydroxy-2-oxo-4-phosphonooxybutanoate. The chain is Erythronate-4-phosphate dehydrogenase from Klebsiella pneumoniae (strain 342).